Here is a 38-residue protein sequence, read N- to C-terminus: MKVRASVKPRCEYCRVIKRKGVLRVICSRQPKHKQRQG.

Belongs to the bacterial ribosomal protein bL36 family.

The polypeptide is Large ribosomal subunit protein bL36 (Roseiflexus sp. (strain RS-1)).